The following is a 313-amino-acid chain: MATVNHTNCNTASPAALEEAKTSGGLRSPQIAHEPHDFGGSQLLPSGQEIQSEDEGTVPAGDGSSCNIRGSRTQSPGGCSVEAVLARKKHRRRPSKRKRHWRPYLELSWAEKQQRDERQSQRASRVREEMFAKGQPLAPYNTTQFLMNDRDLEEPNLDVLHGPSHSGSGGENEAGDSDGQGRAHGEFQQRDFSEAYERYHTESLQGRSKQELVRDYLDLERRLSQAEQETRRLRQLQGCSSRQPCQQVEELAAEVERLRTENQRLRQENEMWNREGGYCDQEKPASEGTPWPKVEAPFQTHTGQLGHREAGDR.

Positions M1–S13 are enriched in polar residues. The segment at M1 to G78 is disordered. Phosphoserine is present on residues S28, S52, S75, and S80. A compositionally biased stretch (polar residues) spans S64 to G77. Disordered stretches follow at residues E111–P139, P155–E194, and Q267–R313. The segment covering K112–F131 has biased composition (basic and acidic residues). The tract at residues P139–T142 is interaction with P-TEFb. Positions G179–E194 are enriched in basic and acidic residues. Residues R207–G276 are a coiled coil. The interval Q225–S286 is interaction with CCNT1, HEXIM1 and HEXIM2.

Belongs to the HEXIM family. As to quaternary structure, homooligomer and heterooligomer with HEXIM1; probably dimeric. Core component of the 7SK RNP complex, at least composed of 7SK RNA, LARP7, MEPCE, HEXIM1 (or HEXIM2) and P-TEFb (composed of CDK9 and CCNT1/cyclin-T1). Interacts with CCNT2.

The protein resides in the nucleus. Functionally, transcriptional regulator which functions as a general RNA polymerase II transcription inhibitor. Core component of the 7SK RNP complex: in cooperation with 7SK snRNA sequesters P-TEFb in a large inactive 7SK snRNP complex preventing RNA polymerase II phosphorylation and subsequent transcriptional elongation. The sequence is that of Protein HEXIM2 (Hexim2) from Mus musculus (Mouse).